Here is a 577-residue protein sequence, read N- to C-terminus: Sensory neuron membrane protein 2 (577 aa).

Topologically, residues 1–6 (MVQCTL) are cytoplasmic. The chain crosses the membrane as a helical span at residues 7–27 (IWAGIGAMMAVSGALLGWVVF). The Extracellular segment spans residues 28–519 (PRAVHEKVIE…LMKVLSLLDV (492 aa)). Asn-66, Asn-161, Asn-271, and Asn-307 each carry an N-linked (GlcNAc...) asparagine glycan. Cystine bridges form between Cys-316–Cys-384, Cys-345–Cys-411, and Cys-386–Cys-400. The helical transmembrane segment at 520-540 (VQWVLIGVGLLLAVLMPTVYF) threads the bilayer. Topologically, residues 541-577 (VKRCRGEGSRTVSPAVTATTSAASLSTVAGVTGDRSK) are cytoplasmic.

This sequence belongs to the CD36 family.

The protein resides in the cell membrane. Functionally, plays an olfactory role that is not restricted to pheromone sensitivity. This Anopheles gambiae (African malaria mosquito) protein is Sensory neuron membrane protein 2.